The sequence spans 78 residues: MKQIFIGIIRFYQKFISPMTPPTCRFYPTCSHYGLEAFQKHGTFKGFWLTCKRILKCHPFHPGGFDPVPDKKDDKVNS.

Belongs to the UPF0161 family.

The protein resides in the cell membrane. Could be involved in insertion of integral membrane proteins into the membrane. This is Putative membrane protein insertion efficiency factor from Bacillus mycoides (strain KBAB4) (Bacillus weihenstephanensis).